Reading from the N-terminus, the 353-residue chain is tRNA-specific 2-thiouridylase MnmA 2 (353 aa).

6–13 provides a ligand contact to ATP; it reads LLSGGVDS. Positions 92–94 are interaction with target base in tRNA; it reads NPD. The active-site Nucleophile is the C97. A disulfide bridge connects residues C97 and C192. G120 contributes to the ATP binding site. The interaction with tRNA stretch occupies residues 142–144; that stretch reads KDQ. C192 (cysteine persulfide intermediate) is an active-site residue.

Belongs to the MnmA/TRMU family.

Its subcellular location is the cytoplasm. It carries out the reaction S-sulfanyl-L-cysteinyl-[protein] + uridine(34) in tRNA + AH2 + ATP = 2-thiouridine(34) in tRNA + L-cysteinyl-[protein] + A + AMP + diphosphate + H(+). In terms of biological role, catalyzes the 2-thiolation of uridine at the wobble position (U34) of tRNA, leading to the formation of s(2)U34. This is tRNA-specific 2-thiouridylase MnmA 2 from Bacteroides fragilis (strain YCH46).